We begin with the raw amino-acid sequence, 126 residues long: Ribulose bisphosphate carboxylase small subunit, chloroplastic 1 (126 aa).

The protein belongs to the RuBisCO small chain family. Heterohexadecamer of 8 large and 8 small subunits.

It localises to the plastid. The protein resides in the chloroplast. Its function is as follows. RuBisCO catalyzes two reactions: the carboxylation of D-ribulose 1,5-bisphosphate, the primary event in carbon dioxide fixation, as well as the oxidative fragmentation of the pentose substrate. Both reactions occur simultaneously and in competition at the same active site. Although the small subunit is not catalytic it is essential for maximal activity. The sequence is that of Ribulose bisphosphate carboxylase small subunit, chloroplastic 1 from Acetabularia peniculus (Green alga).